The chain runs to 215 residues: Pyrrolidone-carboxylate peptidase (215 aa).

Catalysis depends on residues glutamate 78, cysteine 141, and histidine 165.

The protein belongs to the peptidase C15 family. As to quaternary structure, homotetramer.

It localises to the cytoplasm. The catalysed reaction is Release of an N-terminal pyroglutamyl group from a polypeptide, the second amino acid generally not being Pro.. In terms of biological role, removes 5-oxoproline from various penultimate amino acid residues except L-proline. The sequence is that of Pyrrolidone-carboxylate peptidase from Lacticaseibacillus paracasei (strain ATCC 334 / BCRC 17002 / CCUG 31169 / CIP 107868 / KCTC 3260 / NRRL B-441) (Lactobacillus paracasei).